The chain runs to 167 residues: RNA pyrophosphohydrolase (167 aa).

In terms of domain architecture, Nudix hydrolase spans 8–159; sequence PYRTCVGVML…KRPVYERVVK (152 aa). Residues 47 to 68 carry the Nudix box motif; the sequence is GGVDPGEDTWAAAKRELYEETS.

Belongs to the Nudix hydrolase family. RppH subfamily. A divalent metal cation is required as a cofactor.

Accelerates the degradation of transcripts by removing pyrophosphate from the 5'-end of triphosphorylated RNA, leading to a more labile monophosphorylated state that can stimulate subsequent ribonuclease cleavage. The polypeptide is RNA pyrophosphohydrolase (Bradyrhizobium diazoefficiens (strain JCM 10833 / BCRC 13528 / IAM 13628 / NBRC 14792 / USDA 110)).